We begin with the raw amino-acid sequence, 758 residues long: Probable TonB-dependent receptor NMB0964 (758 aa).

The N-terminal stretch at 1 to 24 (MAQTTLKPIVLSILLINTPLLAQA) is a signal peptide. In terms of domain architecture, TBDR plug spans 50–161 (LLHTSTASDK…VAGLVDVADG (112 aa)). In terms of domain architecture, TBDR beta-barrel spans 171 to 758 (GVSGELGLRL…SFTGGVNVKF (588 aa)). Positions 741–758 (SDTPQMGRSFTGGVNVKF) match the TonB C-terminal box motif.

It belongs to the TonB-dependent receptor family.

Its subcellular location is the cell outer membrane. Functionally, probable receptor, TonB-dependent. This is Probable TonB-dependent receptor NMB0964 from Neisseria meningitidis serogroup B (strain ATCC BAA-335 / MC58).